We begin with the raw amino-acid sequence, 367 residues long: Peptide chain release factor 1 (367 aa).

Gln243 is modified (N5-methylglutamine).

The protein belongs to the prokaryotic/mitochondrial release factor family. Post-translationally, methylated by PrmC. Methylation increases the termination efficiency of RF1.

It localises to the cytoplasm. Peptide chain release factor 1 directs the termination of translation in response to the peptide chain termination codons UAG and UAA. The sequence is that of Peptide chain release factor 1 from Acidovorax sp. (strain JS42).